The primary structure comprises 123 residues: UPF0738 protein BCE33L1094 (123 aa).

It belongs to the UPF0738 family.

The chain is UPF0738 protein BCE33L1094 from Bacillus cereus (strain ZK / E33L).